The sequence spans 148 residues: Phosphopantetheine adenylyltransferase (148 aa).

This sequence belongs to the eukaryotic CoaD family.

The protein resides in the cytoplasm. It carries out the reaction (R)-4'-phosphopantetheine + ATP + H(+) = 3'-dephospho-CoA + diphosphate. Its pathway is cofactor biosynthesis; coenzyme A biosynthesis. Functionally, reversibly transfers an adenylyl group from ATP to 4'-phosphopantetheine, yielding dephospho-CoA (dPCoA) and pyrophosphate. The protein is Phosphopantetheine adenylyltransferase of Archaeoglobus fulgidus (strain ATCC 49558 / DSM 4304 / JCM 9628 / NBRC 100126 / VC-16).